The following is a 470-amino-acid chain: Probable citrate synthase, mitochondrial (470 aa).

Active-site residues include H297, H351, and D406.

The protein belongs to the citrate synthase family. Homodimer.

It localises to the mitochondrion matrix. It catalyses the reaction oxaloacetate + acetyl-CoA + H2O = citrate + CoA + H(+). The protein operates within carbohydrate metabolism; tricarboxylic acid cycle; isocitrate from oxaloacetate: step 1/2. This is Probable citrate synthase, mitochondrial from Leishmania major.